A 194-amino-acid chain; its full sequence is Orotate phosphoribosyltransferase (194 aa).

116–124 (EDIVTTGLS) serves as a coordination point for 5-phospho-alpha-D-ribose 1-diphosphate. Orotate-binding residues include T120 and R148.

This sequence belongs to the purine/pyrimidine phosphoribosyltransferase family. PyrE subfamily. In terms of assembly, homodimer. The cofactor is Mg(2+).

The catalysed reaction is orotidine 5'-phosphate + diphosphate = orotate + 5-phospho-alpha-D-ribose 1-diphosphate. It participates in pyrimidine metabolism; UMP biosynthesis via de novo pathway; UMP from orotate: step 1/2. Catalyzes the transfer of a ribosyl phosphate group from 5-phosphoribose 1-diphosphate to orotate, leading to the formation of orotidine monophosphate (OMP). The polypeptide is Orotate phosphoribosyltransferase (Phenylobacterium zucineum (strain HLK1)).